The primary structure comprises 443 residues: Thymidine phosphorylase (443 aa).

It belongs to the thymidine/pyrimidine-nucleoside phosphorylase family. In terms of assembly, homodimer.

The enzyme catalyses thymidine + phosphate = 2-deoxy-alpha-D-ribose 1-phosphate + thymine. It participates in pyrimidine metabolism; dTMP biosynthesis via salvage pathway; dTMP from thymine: step 1/2. Its function is as follows. The enzymes which catalyze the reversible phosphorolysis of pyrimidine nucleosides are involved in the degradation of these compounds and in their utilization as carbon and energy sources, or in the rescue of pyrimidine bases for nucleotide synthesis. The protein is Thymidine phosphorylase of Aliivibrio salmonicida (strain LFI1238) (Vibrio salmonicida (strain LFI1238)).